An 81-amino-acid polypeptide reads, in one-letter code: Antitoxin MT2731 (81 aa).

Antitoxin component of a type II toxin-antitoxin (TA) system. Neutralizes the effect of cognate toxin MT2730. The polypeptide is Antitoxin MT2731 (Mycobacterium tuberculosis (strain CDC 1551 / Oshkosh)).